The sequence spans 562 residues: Sulfite reductase [NADPH] hemoprotein beta-component (562 aa).

[4Fe-4S] cluster contacts are provided by cysteine 428, cysteine 434, cysteine 473, and cysteine 477. Cysteine 477 lines the siroheme pocket.

The protein belongs to the nitrite and sulfite reductase 4Fe-4S domain family. As to quaternary structure, alpha(8)-beta(8). The alpha component is a flavoprotein, the beta component is a hemoprotein. Requires siroheme as cofactor. [4Fe-4S] cluster serves as cofactor.

The enzyme catalyses hydrogen sulfide + 3 NADP(+) + 3 H2O = sulfite + 3 NADPH + 4 H(+). It functions in the pathway sulfur metabolism; hydrogen sulfide biosynthesis; hydrogen sulfide from sulfite (NADPH route): step 1/1. In terms of biological role, component of the sulfite reductase complex that catalyzes the 6-electron reduction of sulfite to sulfide. This is one of several activities required for the biosynthesis of L-cysteine from sulfate. This Myxococcus xanthus (strain DK1622) protein is Sulfite reductase [NADPH] hemoprotein beta-component.